Here is a 622-residue protein sequence, read N- to C-terminus: FERM domain-containing protein 6 (622 aa).

Residues 16-328 (RSVCIFLPND…NSHRLYMNLQ (313 aa)) enclose the FERM domain. A disordered region spans residues 364 to 445 (KRSRASGSSA…SGVESGGKDR (82 aa)). Composition is skewed to low complexity over residues 384–395 (HSTASHSSSHTS) and 425–438 (SSMT…TSGV). Ser-522 is subject to Phosphoserine. Thr-523 is modified (phosphothreonine). Phosphoserine is present on residues Ser-525, Ser-542, and Ser-544.

The protein resides in the cytoplasm. The protein localises to the cell membrane. This chain is FERM domain-containing protein 6 (FRMD6), found in Homo sapiens (Human).